The chain runs to 541 residues: CTP synthase (541 aa).

Residues 1 to 265 (MTRFIFITGG…DAVVCRHFGL (265 aa)) are amidoligase domain. Ser-13 is a CTP binding site. Ser-13 serves as a coordination point for UTP. 14-19 (SLGKGL) contacts ATP. Tyr-54 contributes to the L-glutamine binding site. Residue Asp-71 participates in ATP binding. Mg(2+)-binding residues include Asp-71 and Glu-139. Residues 146–148 (DIE), 186–191 (KTKPTQ), and Lys-222 contribute to the CTP site. Residues 186-191 (KTKPTQ) and Lys-222 contribute to the UTP site. One can recognise a Glutamine amidotransferase type-1 domain in the interval 290–540 (TIAIVGKYIS…IAAAVRQSRL (251 aa)). Gly-352 contacts L-glutamine. The active-site Nucleophile; for glutamine hydrolysis is Cys-379. L-glutamine is bound by residues 380–383 (FGMQ), Glu-403, and Arg-468. Active-site residues include His-513 and Glu-515.

It belongs to the CTP synthase family. In terms of assembly, homotetramer.

It carries out the reaction UTP + L-glutamine + ATP + H2O = CTP + L-glutamate + ADP + phosphate + 2 H(+). The enzyme catalyses L-glutamine + H2O = L-glutamate + NH4(+). The catalysed reaction is UTP + NH4(+) + ATP = CTP + ADP + phosphate + 2 H(+). Its pathway is pyrimidine metabolism; CTP biosynthesis via de novo pathway; CTP from UDP: step 2/2. Allosterically activated by GTP, when glutamine is the substrate; GTP has no effect on the reaction when ammonia is the substrate. The allosteric effector GTP functions by stabilizing the protein conformation that binds the tetrahedral intermediate(s) formed during glutamine hydrolysis. Inhibited by the product CTP, via allosteric rather than competitive inhibition. Its function is as follows. Catalyzes the ATP-dependent amination of UTP to CTP with either L-glutamine or ammonia as the source of nitrogen. Regulates intracellular CTP levels through interactions with the four ribonucleotide triphosphates. The chain is CTP synthase from Paramagnetospirillum magneticum (strain ATCC 700264 / AMB-1) (Magnetospirillum magneticum).